The following is a 350-amino-acid chain: Ferredoxin--NADP reductase (350 aa).

T22, E41, Q49, Y54, V94, F129, D295, and S336 together coordinate FAD.

Belongs to the ferredoxin--NADP reductase type 2 family. Homodimer. FAD serves as cofactor.

It carries out the reaction 2 reduced [2Fe-2S]-[ferredoxin] + NADP(+) + H(+) = 2 oxidized [2Fe-2S]-[ferredoxin] + NADPH. The protein is Ferredoxin--NADP reductase of Chlorobium luteolum (strain DSM 273 / BCRC 81028 / 2530) (Pelodictyon luteolum).